The chain runs to 381 residues: N-acetyldiaminopimelate deacetylase (381 aa).

Aspartate 71 is an active-site residue. Residue glutamate 130 is the Proton acceptor of the active site.

The protein belongs to the peptidase M20A family. N-acetyldiaminopimelate deacetylase subfamily.

It catalyses the reaction N-acetyl-(2S,6S)-2,6-diaminopimelate + H2O = (2S,6S)-2,6-diaminopimelate + acetate. It functions in the pathway amino-acid biosynthesis; L-lysine biosynthesis via DAP pathway; LL-2,6-diaminopimelate from (S)-tetrahydrodipicolinate (acetylase route): step 3/3. In terms of biological role, catalyzes the conversion of N-acetyl-diaminopimelate to diaminopimelate and acetate. This chain is N-acetyldiaminopimelate deacetylase, found in Ligilactobacillus salivarius (strain UCC118) (Lactobacillus salivarius).